A 256-amino-acid polypeptide reads, in one-letter code: Membrane-anchored junction protein (256 aa).

Residues 1–232 (MSLKPFTYPF…HSSPPPPKEP (232 aa)) are Nuclear-facing. Disordered regions lie at residues 143 to 197 (KRKL…TPAS) and 211 to 235 (HGLQ…PGAR). Residues 164–173 (ETSSEASSNK) are compositionally biased toward polar residues. A compositionally biased stretch (basic and acidic residues) spans 175–184 (PLKESKRSTD). The chain crosses the membrane as a helical span at residues 233–251 (GARGFLGFLSALFPFRYFF). Topologically, residues 252–256 (KKSGQ) are perinuclear space.

Belongs to the MAJIN family. In terms of assembly, component of the MAJIN-TERB1-TERB2 complex, composed of MAJIN, TERB1 and TERB2. In terms of tissue distribution, specifically expressed in germline tissues.

The protein localises to the nucleus inner membrane. Its subcellular location is the chromosome. It is found in the telomere. In terms of biological role, meiosis-specific telomere-associated protein involved in meiotic telomere attachment to the nucleus inner membrane, a crucial step for homologous pairing and synapsis. Component of the MAJIN-TERB1-TERB2 complex, which promotes telomere cap exchange by mediating attachment of telomeric DNA to the inner nuclear membrane and replacement of the protective cap of telomeric chromosomes: in early meiosis, the MAJIN-TERB1-TERB2 complex associates with telomeric DNA and the shelterin/telosome complex. During prophase, the complex matures and promotes release of the shelterin/telosome complex from telomeric DNA. In the complex, MAJIN acts as the anchoring subunit to the nucleus inner membrane. MAJIN shows DNA-binding activity, possibly for the stabilization of telomere attachment on the nucleus inner membrane. This Mus musculus (Mouse) protein is Membrane-anchored junction protein.